The primary structure comprises 108 residues: Long neurotoxin 13 (108 aa).

The N-terminal stretch at 1–21 (MKTLLLTLVVVTIVCLDLAYT) is a signal peptide. 5 cysteine pairs are disulfide-bonded: C24–C42, C35–C63, C48–C52, C67–C78, and C79–C84.

This sequence belongs to the three-finger toxin family. Long-chain subfamily. Type II alpha-neurotoxin sub-subfamily. As to expression, expressed by the venom gland.

It is found in the secreted. Binds with high affinity to muscular (alpha-1/CHRNA1) and neuronal (alpha-7/CHRNA7) nicotinic acetylcholine receptor (nAChR) and inhibits acetylcholine from binding to the receptor, thereby impairing neuromuscular and neuronal transmission. This chain is Long neurotoxin 13, found in Drysdalia coronoides (White-lipped snake).